The sequence spans 1107 residues: DNA polymerase delta catalytic subunit (1107 aa).

The interval 1–34 (MDGKRRPGPGPGVPPKRARGGLWDDDDAPRPSQF) is disordered. The Nuclear localization signal signature appears at 4–19 (KRRPGPGPGVPPKRAR). Residue Arg-19 is modified to Omega-N-methylarginine. Residue Lys-574 forms a Glycyl lysine isopeptide (Lys-Gly) (interchain with G-Cter in SUMO2) linkage. Residues Cys-1012, Cys-1015, Cys-1026, and Cys-1029 each contribute to the Zn(2+) site. A CysA-type zinc finger spans residues 1012–1029 (CIGCRTVLSHQGAVCEFC). [4Fe-4S] cluster contacts are provided by Cys-1058, Cys-1061, Cys-1071, and Cys-1076. A CysB motif motif is present at residues 1058–1076 (CQRCQGSLHEDVICTSRDC).

This sequence belongs to the DNA polymerase type-B family. Component of the tetrameric DNA polymerase delta complex (Pol-delta4), which consists of POLD1/p125, POLD2/p50, POLD3/p66/p68 and POLD4/p12, with POLD1 bearing both DNA polymerase and 3' to 5' proofreading exonuclease activities. Within Pol-delta4, directly interacts with POLD2 and POLD4. Following genotoxic stress by DNA-damaging agents, such as ultraviolet light and methyl methanesulfonate, or by replication stress induced by treatment with hydroxyurea or aphidicolin, Pol-delta4 is converted into a trimeric form of the complex (Pol-delta3) by POLD4 degradation. Pol-delta3 is the major form at S phase replication sites and DNA damage sites. POLD1 displays different catalytic properties depending upon the complex it is found in. It exhibits higher proofreading activity and fidelity than Pol-delta4, making it particularly well suited to respond to DNA damage. Directly interacts with PCNA, as do POLD3 and POLD4; this interaction stimulates Pol-delta4 polymerase activity. As POLD2 and POLD4, directly interacts with WRNIP1; this interaction stimulates DNA polymerase delta-mediated DNA synthesis, independently of the presence of PCNA. This stimulation may be due predominantly to an increase of initiation frequency and also to increased processivity. Also observed as a dimeric complex with POLD2 (Pol-delta2 complex). Pol-delta2 is relatively insensitive to the PCNA stimulation (2-5-fold) compared to Pol-delta4 that is stimulated by over 50-fold. The DNA polymerase delta complex interacts with POLDIP2; this interaction is probably mediated through direct binding to POLD2. Interacts with CIAO1. Interacts with POLDIP2. Interacts with RFC1. The cofactor is [4Fe-4S] cluster. Widely expressed, with high levels of expression in heart and lung.

The protein localises to the nucleus. It carries out the reaction DNA(n) + a 2'-deoxyribonucleoside 5'-triphosphate = DNA(n+1) + diphosphate. With respect to regulation, regulated by alteration of quaternary structure. Exhibits burst rates of DNA synthesis are about 5 times faster in the presence of POLD4 (Pol-delta4 complex) than in its absence (Pol-delta3 complex), while the affinity of the enzyme for its DNA and dNTP substrates appears unchanged. The Pol-delta3 complex is more likely to proofread DNA synthesis because it cleaves single-stranded DNA twice as fast and transfers mismatched DNA from the polymerase to the exonuclease sites 9 times faster compared to the Pol-delta3 complex. Pol-delta3 also extends mismatched primers 3 times more slowly in the absence of POLD4. The conversion of Pol-delta4 into Pol-delta3 is induced by genotoxic stress or by replication stress leading POLD4 degradation. Stimulated in the presence of PCNA. This stimulation is further increased in the presence of KCTD13/PDIP1, most probably via direct interaction between KCTD13 and POLD2. As the catalytic component of the trimeric (Pol-delta3 complex) and tetrameric DNA polymerase delta complexes (Pol-delta4 complex), plays a crucial role in high fidelity genome replication, including in lagging strand synthesis, and repair. Exhibits both DNA polymerase and 3'- to 5'-exonuclease activities. Requires the presence of accessory proteins POLD2, POLD3 and POLD4 for full activity. Depending upon the absence (Pol-delta3) or the presence of POLD4 (Pol-delta4), displays differences in catalytic activity. Most notably, expresses higher proofreading activity in the context of Pol-delta3 compared with that of Pol-delta4. Although both Pol-delta3 and Pol-delta4 process Okazaki fragments in vitro, Pol-delta3 may be better suited to fulfill this task, exhibiting near-absence of strand displacement activity compared to Pol-delta4 and stalling on encounter with the 5'-blocking oligonucleotides. Pol-delta3 idling process may avoid the formation of a gap, while maintaining a nick that can be readily ligated. Along with DNA polymerase kappa, DNA polymerase delta carries out approximately half of nucleotide excision repair (NER) synthesis following UV irradiation. Under conditions of DNA replication stress, in the presence of POLD3 and POLD4, may catalyze the repair of broken replication forks through break-induced replication (BIR). Involved in the translesion synthesis (TLS) of templates carrying O6-methylguanine, 8oxoG or abasic sites. This chain is DNA polymerase delta catalytic subunit, found in Homo sapiens (Human).